The following is a 398-amino-acid chain: Cytochrome b (398 aa).

4 helical membrane-spanning segments follow: residues Phe-38 to Met-58, Trp-82 to Phe-104, Val-119 to Val-139, and Phe-185 to Gly-205. 2 residues coordinate heme b: His-88 and His-102. Positions 189 and 203 each coordinate heme b. His-208 lines the a ubiquinone pocket. Helical transmembrane passes span Tyr-231 to Phe-251, Ala-295 to Gln-316, Ile-328 to Cys-348, and Phe-355 to Pro-374.

It belongs to the cytochrome b family. As to quaternary structure, the main subunits of complex b-c1 are: cytochrome b, cytochrome c1 and the Rieske protein. Requires heme b as cofactor.

The protein localises to the mitochondrion inner membrane. Component of the ubiquinol-cytochrome c reductase complex (complex III or cytochrome b-c1 complex) that is part of the mitochondrial respiratory chain. The b-c1 complex mediates electron transfer from ubiquinol to cytochrome c. Contributes to the generation of a proton gradient across the mitochondrial membrane that is then used for ATP synthesis. In Daucus carota (Wild carrot), this protein is Cytochrome b (MT-CYB).